A 486-amino-acid chain; its full sequence is Cardiolipin synthase A (486 aa).

The next 2 helical transmembrane spans lie at 3-23 (TVYT…IAGV) and 38-58 (MAWL…YLAV). PLD phosphodiesterase domains are found at residues 219-246 (MDLR…VDPR) and 399-426 (EGGL…DMRS). Catalysis depends on residues His224, Lys226, Asp231, His404, Lys406, and Asp411.

It belongs to the phospholipase D family. Cardiolipin synthase subfamily. ClsA sub-subfamily.

The protein resides in the cell inner membrane. The catalysed reaction is 2 a 1,2-diacyl-sn-glycero-3-phospho-(1'-sn-glycerol) = a cardiolipin + glycerol. In terms of biological role, catalyzes the reversible phosphatidyl group transfer from one phosphatidylglycerol molecule to another to form cardiolipin (CL) (diphosphatidylglycerol) and glycerol. The polypeptide is Cardiolipin synthase A (Escherichia coli O157:H7 (strain EC4115 / EHEC)).